A 302-amino-acid polypeptide reads, in one-letter code: UTP--glucose-1-phosphate uridylyltransferase (302 aa).

It belongs to the UDPGP type 2 family. In terms of assembly, homotetramer or homopentamer. The cofactor is Mg(2+).

It catalyses the reaction alpha-D-glucose 1-phosphate + UTP + H(+) = UDP-alpha-D-glucose + diphosphate. Its function is as follows. May play a role in stationary phase survival. This is UTP--glucose-1-phosphate uridylyltransferase (galU) from Escherichia coli O157:H7.